The chain runs to 432 residues: Septin-11 (432 aa).

Ala-2 carries the N-acetylalanine modification. Ser-9 carries the phosphoserine modification. The region spanning 38–304 (QGFCFNILCV…ELYRRCKLEE (267 aa)) is the Septin-type G domain. Positions 48–55 (GETGIGKS) are G1 motif. Residues 48 to 55 (GETGIGKS), Gly-103, 184 to 192 (KADTIAKNE), Gly-238, and Arg-253 contribute to the GTP site. A G3 motif region spans residues 100–103 (DTVG). The G4 motif stretch occupies residues 183-186 (AKAD). Residues 320 to 413 (QETYEAKRNE…LLQSQAQQSG (94 aa)) are a coiled coil. A compositionally biased stretch (low complexity) spans 403–416 (QLLQSQAQQSGAQQ). A disordered region spans residues 403 to 432 (QLLQSQAQQSGAQQTKKDKDKKNSPWLCTE).

This sequence belongs to the TRAFAC class TrmE-Era-EngA-EngB-Septin-like GTPase superfamily. Septin GTPase family. As to quaternary structure, septins polymerize into heterooligomeric protein complexes that form filaments, and can associate with cellular membranes, actin filaments and microtubules. Forms homooligomers. GTPase activity is required for filament formation. Interacts with SEPTIN7, SEPTIN9 and SEPTIN12.

Its subcellular location is the cytoplasm. It localises to the cytoskeleton. The protein resides in the synapse. The protein localises to the cell projection. It is found in the dendritic spine. Its subcellular location is the axon. In terms of biological role, filament-forming cytoskeletal GTPase. May play a role in cytokinesis (Potential). May play a role in the cytoarchitecture of neurons, including dendritic arborization and dendritic spines, and in GABAergic synaptic connectivity. The protein is Septin-11 of Macaca fascicularis (Crab-eating macaque).